A 359-amino-acid polypeptide reads, in one-letter code: UDP-3-O-acylglucosamine N-acyltransferase (359 aa).

Catalysis depends on H256, which acts as the Proton acceptor.

It belongs to the transferase hexapeptide repeat family. LpxD subfamily. Homotrimer.

It catalyses the reaction a UDP-3-O-[(3R)-3-hydroxyacyl]-alpha-D-glucosamine + a (3R)-hydroxyacyl-[ACP] = a UDP-2-N,3-O-bis[(3R)-3-hydroxyacyl]-alpha-D-glucosamine + holo-[ACP] + H(+). The protein operates within bacterial outer membrane biogenesis; LPS lipid A biosynthesis. Its function is as follows. Catalyzes the N-acylation of UDP-3-O-acylglucosamine using 3-hydroxyacyl-ACP as the acyl donor. Is involved in the biosynthesis of lipid A, a phosphorylated glycolipid that anchors the lipopolysaccharide to the outer membrane of the cell. This is UDP-3-O-acylglucosamine N-acyltransferase from Rhodopseudomonas palustris (strain HaA2).